Reading from the N-terminus, the 942-residue chain is Envelope glycoprotein (942 aa).

Residues 1-80 (MDAGASYMRL…LLWTNMCVRA (80 aa)) form the signal peptide. 23 N-linked (GlcNAc...) asparagine; by host glycosylation sites follow: Asn-51, Asn-98, Asn-131, Asn-176, Asn-228, Asn-331, Asn-348, Asn-354, Asn-370, Asn-379, Asn-400, Asn-404, Asn-435, Asn-441, Asn-447, Asn-457, Asn-467, Asn-481, Asn-493, Asn-503, Asn-509, Asn-527, and Asn-534. The Extracellular segment spans residues 81 to 799 (EDYITLISDP…SLKEVFDWSG (719 aa)). The segment at 631–651 (GVGLVIMLVIMAIVAAAGASL) is fusion peptide. Coiled-coil stretches lie at residues 663-713 (KAAV…RIML) and 754-789 (RELQGYDGNLTMLLRESARQTQLAEEQVRRIPDVWE). The interval 697-713 (LEARVARVEAITDRIML) is immunosuppression. A helical membrane pass occupies residues 800 to 820 (WFSWLKYIPIIVVGLVGCILI). Residues 821 to 942 (RAVICVCQPL…VDCETWGKGD (122 aa)) lie on the Cytoplasmic side of the membrane.

As to quaternary structure, the mature envelope protein (Env) consists of a trimer of SU-TM heterodimers attached by noncovalent interactions or by a labile interchain disulfide bond. Specific enzymatic cleavages in vivo yield mature proteins. Envelope glycoproteins are synthesized as an inactive precursor that is N-glycosylated and processed likely by host cell furin or by a furin-like protease in the Golgi to yield the mature SU and TM proteins. The cleavage site between SU and TM requires the minimal sequence [KR]-X-[KR]-R.

It is found in the virion membrane. The protein localises to the host cell membrane. The surface protein (SU) attaches the virus to the host cell by binding to its receptor. This interaction triggers the refolding of the transmembrane protein (TM) and is thought to activate its fusogenic potential by unmasking its fusion peptide. Fusion occurs at the host cell plasma membrane. Functionally, the transmembrane protein (TM) acts as a class I viral fusion protein. Under the current model, the protein has at least 3 conformational states: pre-fusion native state, pre-hairpin intermediate state, and post-fusion hairpin state. During viral and target cell membrane fusion, the coiled coil regions (heptad repeats) assume a trimer-of-hairpins structure, positioning the fusion peptide in close proximity to the C-terminal region of the ectodomain. The formation of this structure appears to drive apposition and subsequent fusion of viral and target cell membranes. Membranes fusion leads to delivery of the nucleocapsid into the cytoplasm. In Caprine arthritis encephalitis virus (strain 63) (CAEV-63), this protein is Envelope glycoprotein (env).